Consider the following 307-residue polypeptide: MARTEGDSWDLANSVGATATMVAAARAAATRRSRPIIADPFAEPLVRAVGLDLFTRAASGEVDLDEVAAGLGFVRMVDTFAARALFFDKFFADAIAAGLRQVVIVASGLDARPYRLPWPTGMRVYEIDQPEVIEFKTTTLARLGASPTADHHPVGIDLRDDWPSALRAAGFDAARPTAWLAEGVRIGFLPPEAETRLLDNVIELSAVGSRLAADYGTINGSSAESQQLAQQMTEGWRAHGLDMDIAGLTYPGEHTDVAAYLRSHGWKTATADHGDLVLAAGLAELTAADRQSPASTIGFVTAVRSTD.

S-adenosyl-L-methionine contacts are provided by residues D128 and 157 to 158; that span reads DL.

This sequence belongs to the UPF0677 family.

Its function is as follows. Exhibits S-adenosyl-L-methionine-dependent methyltransferase activity. The chain is Putative S-adenosyl-L-methionine-dependent methyltransferase MUL_4430 from Mycobacterium ulcerans (strain Agy99).